Here is a 286-residue protein sequence, read N- to C-terminus: Glycine--tRNA ligase alpha subunit (286 aa).

It belongs to the class-II aminoacyl-tRNA synthetase family. In terms of assembly, tetramer of two alpha and two beta subunits.

It localises to the cytoplasm. The enzyme catalyses tRNA(Gly) + glycine + ATP = glycyl-tRNA(Gly) + AMP + diphosphate. The polypeptide is Glycine--tRNA ligase alpha subunit (Campylobacter lari (strain RM2100 / D67 / ATCC BAA-1060)).